Reading from the N-terminus, the 581-residue chain is ATP-dependent lipid A-core flippase (581 aa).

5 helical membrane passes run 15 to 35 (LWPI…ALIL), 68 to 88 (LIVI…SYCI), 152 to 172 (IIGL…ILIV), 252 to 272 (PIIQ…ASFP), and 274 to 294 (IMET…IALM). An ABC transmembrane type-1 domain is found at 27–309 (IVAAVALILN…LTNVNAQFQR (283 aa)). Residues 341–577 (IEFRNVTFCY…NGVYSQLHRM (237 aa)) form the ABC transporter domain. 375 to 382 (GRSGSGKS) contributes to the ATP binding site.

The protein belongs to the ABC transporter superfamily. Lipid exporter (TC 3.A.1.106) family. Homodimer.

It is found in the cell inner membrane. The catalysed reaction is ATP + H2O + lipid A-core oligosaccharideSide 1 = ADP + phosphate + lipid A-core oligosaccharideSide 2.. Involved in lipopolysaccharide (LPS) biosynthesis. Translocates lipid A-core from the inner to the outer leaflet of the inner membrane. Transmembrane domains (TMD) form a pore in the inner membrane and the ATP-binding domain (NBD) is responsible for energy generation. In Photorhabdus laumondii subsp. laumondii (strain DSM 15139 / CIP 105565 / TT01) (Photorhabdus luminescens subsp. laumondii), this protein is ATP-dependent lipid A-core flippase.